A 236-amino-acid polypeptide reads, in one-letter code: 2-C-methyl-D-erythritol 4-phosphate cytidylyltransferase (236 aa).

It belongs to the IspD/TarI cytidylyltransferase family. IspD subfamily. Homodimer.

It carries out the reaction 2-C-methyl-D-erythritol 4-phosphate + CTP + H(+) = 4-CDP-2-C-methyl-D-erythritol + diphosphate. It functions in the pathway isoprenoid biosynthesis; isopentenyl diphosphate biosynthesis via DXP pathway; isopentenyl diphosphate from 1-deoxy-D-xylulose 5-phosphate: step 2/6. Its function is as follows. Catalyzes the formation of 4-diphosphocytidyl-2-C-methyl-D-erythritol from CTP and 2-C-methyl-D-erythritol 4-phosphate (MEP). This is 2-C-methyl-D-erythritol 4-phosphate cytidylyltransferase from Klebsiella pneumoniae subsp. pneumoniae (strain ATCC 700721 / MGH 78578).